A 359-amino-acid polypeptide reads, in one-letter code: Mannonate dehydratase (359 aa).

The protein belongs to the mannonate dehydratase family. Requires Fe(2+) as cofactor. The cofactor is Mn(2+).

It carries out the reaction D-mannonate = 2-dehydro-3-deoxy-D-gluconate + H2O. The protein operates within carbohydrate metabolism; pentose and glucuronate interconversion. Catalyzes the dehydration of D-mannonate. In Bacillus subtilis (strain 168), this protein is Mannonate dehydratase (uxuA).